Consider the following 161-residue polypeptide: Large ribosomal subunit protein uL15 (161 aa).

The tract at residues 1–43 is disordered; that stretch reads MKLSDIADNAGARKKRMRVGRGIGSGKGKTSGRGGKGQTARSG. The span at 21–37 shows a compositional bias: gly residues; sequence RGIGSGKGKTSGRGGKG.

It belongs to the universal ribosomal protein uL15 family. In terms of assembly, part of the 50S ribosomal subunit.

Binds to the 23S rRNA. This Bradyrhizobium sp. (strain BTAi1 / ATCC BAA-1182) protein is Large ribosomal subunit protein uL15.